The primary structure comprises 138 residues: Phospholipase A2 homolog mojave toxin acidic chain (138 aa).

The N-terminal stretch at 1–40 (MRALWIVAVLLVGVEGSLVEFETLIMKIAGRSGISYYSSY) is a signal peptide. Intrachain disulfides connect C42–C131, C44–C60, C59–C111, C65–C138, C66–C104, C73–C97, and C91–C102. Positions 81 to 83 (TYR) are excised as a propeptide. Q84 carries the post-translational modification Pyrrolidone carboxylic acid. Positions 120–126 (DYKYLRF) are excised as a propeptide.

It belongs to the phospholipase A2 family. Group II subfamily. D49 sub-subfamily. Heterodimer of an acidic and a basic chain. The acidic subunit is non-toxic, without enzymatic activity and comprises 3 peptides that are cross-linked by 5 disulfide bridges. The basic subunit is toxic, has phospholipase A2 activity and is composed of a single chain. It depends on Ca(2+) as a cofactor. Expressed by the venom gland.

The protein resides in the secreted. Functionally, snake venom phospholipase A2 (PLA2) that inhibits neuromuscular transmission by blocking acetylcholine release from the nerve termini. This Crotalus scutulatus scutulatus (Mojave rattlesnake) protein is Phospholipase A2 homolog mojave toxin acidic chain.